We begin with the raw amino-acid sequence, 348 residues long: UDP-3-O-acylglucosamine N-acyltransferase (348 aa).

Histidine 243 acts as the Proton acceptor in catalysis.

Belongs to the transferase hexapeptide repeat family. LpxD subfamily. In terms of assembly, homotrimer.

The enzyme catalyses a UDP-3-O-[(3R)-3-hydroxyacyl]-alpha-D-glucosamine + a (3R)-hydroxyacyl-[ACP] = a UDP-2-N,3-O-bis[(3R)-3-hydroxyacyl]-alpha-D-glucosamine + holo-[ACP] + H(+). The protein operates within bacterial outer membrane biogenesis; LPS lipid A biosynthesis. Functionally, catalyzes the N-acylation of UDP-3-O-acylglucosamine using 3-hydroxyacyl-ACP as the acyl donor. Is involved in the biosynthesis of lipid A, a phosphorylated glycolipid that anchors the lipopolysaccharide to the outer membrane of the cell. This Hahella chejuensis (strain KCTC 2396) protein is UDP-3-O-acylglucosamine N-acyltransferase.